Reading from the N-terminus, the 218-residue chain is tRNA (guanosine(18)-2'-O)-methyltransferase (218 aa).

Threonine 111 and isoleucine 154 together coordinate S-adenosyl-L-methionine.

The protein belongs to the class IV-like SAM-binding methyltransferase superfamily. RNA methyltransferase TrmH family.

The enzyme catalyses guanosine(18) in tRNA + S-adenosyl-L-methionine = 2'-O-methylguanosine(18) in tRNA + S-adenosyl-L-homocysteine + H(+). Its function is as follows. Catalyzes the 2'-O methylation of guanosine at position 18 in tRNA. This chain is tRNA (guanosine(18)-2'-O)-methyltransferase, found in Borreliella burgdorferi (strain ATCC 35210 / DSM 4680 / CIP 102532 / B31) (Borrelia burgdorferi).